The chain runs to 266 residues: 4-hydroxy-tetrahydrodipicolinate reductase (266 aa).

An NAD(+)-binding site is contributed by 10-15; the sequence is GPRGRM. Lys-38 lines the NADP(+) pocket. Residues 99–101 and 125–128 each bind NAD(+); these read GTT and APNF. Residue His-155 is the Proton donor/acceptor of the active site. His-156 is a binding site for (S)-2,3,4,5-tetrahydrodipicolinate. The Proton donor role is filled by Lys-159. 165–166 contacts (S)-2,3,4,5-tetrahydrodipicolinate; sequence GT.

Belongs to the DapB family.

The protein localises to the cytoplasm. It carries out the reaction (S)-2,3,4,5-tetrahydrodipicolinate + NAD(+) + H2O = (2S,4S)-4-hydroxy-2,3,4,5-tetrahydrodipicolinate + NADH + H(+). The enzyme catalyses (S)-2,3,4,5-tetrahydrodipicolinate + NADP(+) + H2O = (2S,4S)-4-hydroxy-2,3,4,5-tetrahydrodipicolinate + NADPH + H(+). It functions in the pathway amino-acid biosynthesis; L-lysine biosynthesis via DAP pathway; (S)-tetrahydrodipicolinate from L-aspartate: step 4/4. In terms of biological role, catalyzes the conversion of 4-hydroxy-tetrahydrodipicolinate (HTPA) to tetrahydrodipicolinate. The polypeptide is 4-hydroxy-tetrahydrodipicolinate reductase (Bacillus cereus (strain Q1)).